The sequence spans 384 residues: Queuine tRNA-ribosyltransferase (384 aa).

Asp103 (proton acceptor) is an active-site residue. Residues 103 to 107 (DSGGF), Asp157, Gln200, and Gly227 each bind substrate. Residues 258–264 (GVGTYRE) are RNA binding. The Nucleophile role is filled by Asp277. The segment at 282-286 (TRLAR) is RNA binding; important for wobble base 34 recognition. Residues Cys315, Cys317, Cys320, and His346 each coordinate Zn(2+).

It belongs to the queuine tRNA-ribosyltransferase family. In terms of assembly, homodimer. Within each dimer, one monomer is responsible for RNA recognition and catalysis, while the other monomer binds to the replacement base PreQ1. Zn(2+) serves as cofactor.

It catalyses the reaction 7-aminomethyl-7-carbaguanine + guanosine(34) in tRNA = 7-aminomethyl-7-carbaguanosine(34) in tRNA + guanine. The protein operates within tRNA modification; tRNA-queuosine biosynthesis. In terms of biological role, catalyzes the base-exchange of a guanine (G) residue with the queuine precursor 7-aminomethyl-7-deazaguanine (PreQ1) at position 34 (anticodon wobble position) in tRNAs with GU(N) anticodons (tRNA-Asp, -Asn, -His and -Tyr). Catalysis occurs through a double-displacement mechanism. The nucleophile active site attacks the C1' of nucleotide 34 to detach the guanine base from the RNA, forming a covalent enzyme-RNA intermediate. The proton acceptor active site deprotonates the incoming PreQ1, allowing a nucleophilic attack on the C1' of the ribose to form the product. After dissociation, two additional enzymatic reactions on the tRNA convert PreQ1 to queuine (Q), resulting in the hypermodified nucleoside queuosine (7-(((4,5-cis-dihydroxy-2-cyclopenten-1-yl)amino)methyl)-7-deazaguanosine). This chain is Queuine tRNA-ribosyltransferase, found in Synechococcus elongatus (strain ATCC 33912 / PCC 7942 / FACHB-805) (Anacystis nidulans R2).